A 496-amino-acid chain; its full sequence is Fusarielin biosynthesis cluster transcription factor FSL7 (496 aa).

Residues 16–46 (CDRCHELKIRCTRTGGTESRCDRCEKNDIDC) constitute a DNA-binding region (zn(2)-C6 fungal-type). Disordered regions lie at residues 57–102 (PKSQ…SINS), 189–224 (RSINHRSGSENESMEGNAELQSTQSASGSPQEEDQM), 281–307 (ANHTSSSSSSNSTTVDGPSEIRNQSRS), 348–379 (GSTSSSTYNDTTAHPSSASLPSQTGGPTKPRT), and 444–470 (MTREQHVSTGHGPDRHTSPVLSSAQAA). Polar residues-rich tracts occupy residues 65-89 (GPNTTARQNDTTTRGRIQQEQQEQM) and 207-218 (ELQSTQSASGSP). Over residues 281–294 (ANHTSSSSSSNSTT) the composition is skewed to low complexity. The span at 355 to 379 (YNDTTAHPSSASLPSQTGGPTKPRT) shows a compositional bias: polar residues. Residues 444 to 460 (MTREQHVSTGHGPDRHT) are compositionally biased toward basic and acidic residues.

Its subcellular location is the nucleus. Transcription regulator that specifically up-regulates the gene cluster that mediates the biosynthesis of fusarielins F, G and H, decaketide compounds with 5 methylations and a decaline core that act as mycoestrogens as they stimulate growth of MCF-7 breast cancer cells. Probably binds the 5'-CGGNNNCCG-3' motif present in the promoter of all the cluster genes. The polypeptide is Fusarielin biosynthesis cluster transcription factor FSL7 (Gibberella zeae (strain ATCC MYA-4620 / CBS 123657 / FGSC 9075 / NRRL 31084 / PH-1) (Wheat head blight fungus)).